The chain runs to 471 residues: Variant surface glycoprotein ILTAT 1.21 (471 aa).

Positions 1 to 21 are cleaved as a signal peptide; the sequence is MLRALLPSTTLALILAGGGHA. N-linked (GlcNAc...) asparagine glycans are attached at residues Asn64 and Asn405. Positions 406–449 are disordered; sequence ATADECPETRCEYDSEKNECRPKKGTETTATGPGERTTPADGKA. Residues 412–431 are compositionally biased toward basic and acidic residues; sequence PETRCEYDSEKNECRPKKGT. Residue Asn450 is glycosylated (N-linked (GlcNAc...) asparagine). A lipid anchor (GPI-anchor amidated serine) is attached at Ser454. Residues 455 to 471 constitute a propeptide, removed in mature form; sequence DSLLIKTSPLWLAFLLF.

Its subcellular location is the cell membrane. Functionally, VSG forms a coat on the surface of the parasite. The trypanosome evades the immune response of the host by expressing a series of antigenically distinct VSGs from an estimated 1000 VSG genes. This is Variant surface glycoprotein ILTAT 1.21 from Trypanosoma brucei brucei.